Reading from the N-terminus, the 382-residue chain is Cytoplasmic tRNA 2-thiolation protein 2 (382 aa).

The protein belongs to the CTU2/NCS2 family.

The protein resides in the cytoplasm. It participates in tRNA modification; 5-methoxycarbonylmethyl-2-thiouridine-tRNA biosynthesis. Plays a central role in 2-thiolation of mcm(5)S(2)U at tRNA wobble positions of tRNA(Lys), tRNA(Glu) and tRNA(Gln). May act by forming a heterodimer with NCS6 that ligates sulfur from thiocarboxylated URM1 onto the uridine of tRNAs at wobble position. Prior mcm(5) tRNA modification by the elongator complex is required for 2-thiolation. May also be involved in protein urmylation. This is Cytoplasmic tRNA 2-thiolation protein 2 from Phaeosphaeria nodorum (strain SN15 / ATCC MYA-4574 / FGSC 10173) (Glume blotch fungus).